Reading from the N-terminus, the 259-residue chain is Ubiquinone/menaquinone biosynthesis C-methyltransferase UbiE (259 aa).

Residues Thr-82, Asp-103, 131–132, and Ser-148 contribute to the S-adenosyl-L-methionine site; that span reads NA.

The protein belongs to the class I-like SAM-binding methyltransferase superfamily. MenG/UbiE family.

It carries out the reaction a 2-demethylmenaquinol + S-adenosyl-L-methionine = a menaquinol + S-adenosyl-L-homocysteine + H(+). The enzyme catalyses a 2-methoxy-6-(all-trans-polyprenyl)benzene-1,4-diol + S-adenosyl-L-methionine = a 5-methoxy-2-methyl-3-(all-trans-polyprenyl)benzene-1,4-diol + S-adenosyl-L-homocysteine + H(+). Its pathway is quinol/quinone metabolism; menaquinone biosynthesis; menaquinol from 1,4-dihydroxy-2-naphthoate: step 2/2. It functions in the pathway cofactor biosynthesis; ubiquinone biosynthesis. Methyltransferase required for the conversion of demethylmenaquinol (DMKH2) to menaquinol (MKH2) and the conversion of 2-polyprenyl-6-methoxy-1,4-benzoquinol (DDMQH2) to 2-polyprenyl-3-methyl-6-methoxy-1,4-benzoquinol (DMQH2). This Vibrio campbellii (strain ATCC BAA-1116) protein is Ubiquinone/menaquinone biosynthesis C-methyltransferase UbiE.